The sequence spans 185 residues: Large ribosomal subunit protein uL5 (185 aa).

This sequence belongs to the universal ribosomal protein uL5 family. As to quaternary structure, part of the 50S ribosomal subunit; part of the 5S rRNA subcomplex. Contacts the 5S rRNA and the P site tRNA. Forms a bridge to the 30S subunit in the 70S ribosome. Both N-terminus methionine truncation and retention have been observed for this protein. In terms of processing, may be methylated twice, on undetermined residues.

In terms of biological role, this is one of the proteins that bind and probably mediate the attachment of the 5S RNA into the large ribosomal subunit, where it forms part of the central protuberance. In the 70S ribosome it contacts protein S13 of the 30S subunit (bridge B1b), connecting the 2 subunits; this bridge is implicated in subunit movement. Contacts the P site tRNA; the 5S rRNA and some of its associated proteins might help stabilize positioning of ribosome-bound tRNAs. The polypeptide is Large ribosomal subunit protein uL5 (Rhodopseudomonas palustris (strain ATCC BAA-98 / CGA009)).